Reading from the N-terminus, the 362-residue chain is 2-aminoethylphosphonate--pyruvate transaminase (362 aa).

K193 carries the N6-(pyridoxal phosphate)lysine modification.

This sequence belongs to the class-V pyridoxal-phosphate-dependent aminotransferase family. PhnW subfamily. In terms of assembly, homodimer. The cofactor is pyridoxal 5'-phosphate.

The enzyme catalyses (2-aminoethyl)phosphonate + pyruvate = phosphonoacetaldehyde + L-alanine. In terms of biological role, involved in phosphonate degradation. The chain is 2-aminoethylphosphonate--pyruvate transaminase from Bacteroides fragilis (strain ATCC 25285 / DSM 2151 / CCUG 4856 / JCM 11019 / LMG 10263 / NCTC 9343 / Onslow / VPI 2553 / EN-2).